A 439-amino-acid polypeptide reads, in one-letter code: Ribosomal protein uS12 methylthiotransferase RimO (439 aa).

An MTTase N-terminal domain is found at 1–117 (MNIGFISLGC…IAGVVNRIAQ (117 aa)). 6 residues coordinate [4Fe-4S] cluster: Cys-10, Cys-46, Cys-80, Cys-154, Cys-158, and Cys-161. The Radical SAM core domain occupies 140 to 370 (TTPPGSAYLK…LRLQQKITRQ (231 aa)). A TRAM domain is found at 373–439 (LARINTQEKV…RNYDMIGEYQ (67 aa)).

This sequence belongs to the methylthiotransferase family. RimO subfamily. Requires [4Fe-4S] cluster as cofactor.

Its subcellular location is the cytoplasm. The catalysed reaction is L-aspartate(89)-[ribosomal protein uS12]-hydrogen + (sulfur carrier)-SH + AH2 + 2 S-adenosyl-L-methionine = 3-methylsulfanyl-L-aspartate(89)-[ribosomal protein uS12]-hydrogen + (sulfur carrier)-H + 5'-deoxyadenosine + L-methionine + A + S-adenosyl-L-homocysteine + 2 H(+). Its function is as follows. Catalyzes the methylthiolation of an aspartic acid residue of ribosomal protein uS12. The sequence is that of Ribosomal protein uS12 methylthiotransferase RimO from Syntrophomonas wolfei subsp. wolfei (strain DSM 2245B / Goettingen).